Here is a 208-residue protein sequence, read N- to C-terminus: Protein-L-isoaspartate O-methyltransferase (208 aa).

The active site involves Ser59.

The protein belongs to the methyltransferase superfamily. L-isoaspartyl/D-aspartyl protein methyltransferase family.

Its subcellular location is the cytoplasm. The catalysed reaction is [protein]-L-isoaspartate + S-adenosyl-L-methionine = [protein]-L-isoaspartate alpha-methyl ester + S-adenosyl-L-homocysteine. Catalyzes the methyl esterification of L-isoaspartyl residues in peptides and proteins that result from spontaneous decomposition of normal L-aspartyl and L-asparaginyl residues. It plays a role in the repair and/or degradation of damaged proteins. This is Protein-L-isoaspartate O-methyltransferase from Yersinia enterocolitica serotype O:8 / biotype 1B (strain NCTC 13174 / 8081).